Consider the following 164-residue polypeptide: SsrA-binding protein (164 aa).

Residues 143–164 (HDKRQDEKQKSIKKEINSVLKR) are disordered. A compositionally biased stretch (basic and acidic residues) spans 145 to 158 (KRQDEKQKSIKKEI).

The protein belongs to the SmpB family.

The protein localises to the cytoplasm. Functionally, required for rescue of stalled ribosomes mediated by trans-translation. Binds to transfer-messenger RNA (tmRNA), required for stable association of tmRNA with ribosomes. tmRNA and SmpB together mimic tRNA shape, replacing the anticodon stem-loop with SmpB. tmRNA is encoded by the ssrA gene; the 2 termini fold to resemble tRNA(Ala) and it encodes a 'tag peptide', a short internal open reading frame. During trans-translation Ala-aminoacylated tmRNA acts like a tRNA, entering the A-site of stalled ribosomes, displacing the stalled mRNA. The ribosome then switches to translate the ORF on the tmRNA; the nascent peptide is terminated with the 'tag peptide' encoded by the tmRNA and targeted for degradation. The ribosome is freed to recommence translation, which seems to be the essential function of trans-translation. This Prochlorococcus marinus (strain MIT 9312) protein is SsrA-binding protein.